The primary structure comprises 354 residues: Carbamoyl phosphate synthase small chain (354 aa).

The segment at 1–167 (MEAVLILEDG…KEPKIHKTAN (167 aa)) is CPSase. Positions 45, 219, and 221 each coordinate L-glutamine. Positions 171–354 (RCVLIDCGVK…DEMIKLKDRK (184 aa)) constitute a Glutamine amidotransferase type-1 domain. The Nucleophile role is filled by Cys246. L-glutamine is bound by residues Leu247, Gln250, Asn288, Gly290, and Phe291. Catalysis depends on residues His330 and Glu332.

This sequence belongs to the CarA family. Composed of two chains; the small (or glutamine) chain promotes the hydrolysis of glutamine to ammonia, which is used by the large (or ammonia) chain to synthesize carbamoyl phosphate. Tetramer of heterodimers (alpha,beta)4.

It carries out the reaction hydrogencarbonate + L-glutamine + 2 ATP + H2O = carbamoyl phosphate + L-glutamate + 2 ADP + phosphate + 2 H(+). The enzyme catalyses L-glutamine + H2O = L-glutamate + NH4(+). It functions in the pathway amino-acid biosynthesis; L-arginine biosynthesis; carbamoyl phosphate from bicarbonate: step 1/1. Its pathway is pyrimidine metabolism; UMP biosynthesis via de novo pathway; (S)-dihydroorotate from bicarbonate: step 1/3. Functionally, small subunit of the glutamine-dependent carbamoyl phosphate synthetase (CPSase). CPSase catalyzes the formation of carbamoyl phosphate from the ammonia moiety of glutamine, carbonate, and phosphate donated by ATP, constituting the first step of 2 biosynthetic pathways, one leading to arginine and/or urea and the other to pyrimidine nucleotides. The small subunit (glutamine amidotransferase) binds and cleaves glutamine to supply the large subunit with the substrate ammonia. In Methanocaldococcus jannaschii (strain ATCC 43067 / DSM 2661 / JAL-1 / JCM 10045 / NBRC 100440) (Methanococcus jannaschii), this protein is Carbamoyl phosphate synthase small chain.